An 89-amino-acid chain; its full sequence is Small ribosomal subunit protein uS15 (89 aa).

Belongs to the universal ribosomal protein uS15 family. In terms of assembly, part of the 30S ribosomal subunit. Forms a bridge to the 50S subunit in the 70S ribosome, contacting the 23S rRNA.

In terms of biological role, one of the primary rRNA binding proteins, it binds directly to 16S rRNA where it helps nucleate assembly of the platform of the 30S subunit by binding and bridging several RNA helices of the 16S rRNA. Forms an intersubunit bridge (bridge B4) with the 23S rRNA of the 50S subunit in the ribosome. The sequence is that of Small ribosomal subunit protein uS15 from Rhizobium leguminosarum bv. trifolii (strain WSM2304).